A 618-amino-acid chain; its full sequence is MPKYRSSTTTQGRNMAGARALWRATGMNSGDFNKIIVAVVNSFTQFVPGHVHLRNVGKLVSEEIYINGGVAKEFNTIAIDDGIAMGHSGMLYSLPSRDLIADSVEYVINAHCVDAMVCISNCDKITPGMLMAALRLNIPTVFVSGGPMESGSVTLSRYNNSSDVKLSLVDAITASANPNITDIDKEQIELEACPTCGSCSGMFTANSMNCLMEVLGLAQPGNGSLLATHFDRKEMFLNAGRYIMNLSRLYYEKDNSIVLPRNIANKMAFENAAMLDIAMGGSTNTVLHLLAAAQEGEISFTMKDIDRLSRKVPHLCKIAPNSDRYYMEDFHRAGGVMGILGELQRCGLLYENTYNILNKSLLDTLRQYDIKLCQDLEIKRMYAAAPAGVRTIKPFSQNNRWNSLDIDRFAGCIRSQEYAYSQDGGLAVLYGNLAPKGCLVKTAGVISELKSFRGPAKVYESQEESVQAILTGQVCSGDVVVIRYEGPKGGPGMQEMLYPTSFLRSMGLDLHCALITDGRFSGGTSGLSVGHISPEAASAGLIGLVCDGDMININISKRSIVLEVSDYVLKNRYEIEISRGTKAWTPSCRNRDVSFSLKAYAKLVTSADTGAVRDRSQL.

Residue Asp-81 coordinates Mg(2+). Cys-122 contributes to the [2Fe-2S] cluster binding site. 2 residues coordinate Mg(2+): Asp-123 and Lys-124. Residue Lys-124 is modified to N6-carboxylysine. Residue Cys-199 coordinates [2Fe-2S] cluster. Residue Glu-495 participates in Mg(2+) binding. The Proton acceptor role is filled by Ser-521.

It belongs to the IlvD/Edd family. As to quaternary structure, homodimer. The cofactor is [2Fe-2S] cluster. Requires Mg(2+) as cofactor.

It carries out the reaction (2R)-2,3-dihydroxy-3-methylbutanoate = 3-methyl-2-oxobutanoate + H2O. The enzyme catalyses (2R,3R)-2,3-dihydroxy-3-methylpentanoate = (S)-3-methyl-2-oxopentanoate + H2O. The protein operates within amino-acid biosynthesis; L-isoleucine biosynthesis; L-isoleucine from 2-oxobutanoate: step 3/4. It participates in amino-acid biosynthesis; L-valine biosynthesis; L-valine from pyruvate: step 3/4. Functionally, functions in the biosynthesis of branched-chain amino acids. Catalyzes the dehydration of (2R,3R)-2,3-dihydroxy-3-methylpentanoate (2,3-dihydroxy-3-methylvalerate) into 2-oxo-3-methylpentanoate (2-oxo-3-methylvalerate) and of (2R)-2,3-dihydroxy-3-methylbutanoate (2,3-dihydroxyisovalerate) into 2-oxo-3-methylbutanoate (2-oxoisovalerate), the penultimate precursor to L-isoleucine and L-valine, respectively. The sequence is that of Dihydroxy-acid dehydratase from Blochmanniella floridana.